Reading from the N-terminus, the 197-residue chain is UPF0301 protein AnaeK_4073 (197 aa).

This sequence belongs to the UPF0301 (AlgH) family.

The protein is UPF0301 protein AnaeK_4073 of Anaeromyxobacter sp. (strain K).